The following is a 226-amino-acid chain: E3 ubiquitin-protein ligase RNF186 (226 aa).

Residues 39–85 (CLVCREPYSGVRPPKLLGCQHAFCAVCLKLLLCVQDDAWSIPCPLCR) form an RING-type zinc finger. A disordered region spans residues 121–143 (GLANPATLTAGQPREAGEEEQDA). A run of 2 helical transmembrane segments spans residues 157 to 177 (HLLLLVLLIILILPFIYPGVI) and 179 to 199 (WVLSFLETLALLLALLFCSHP).

As to quaternary structure, interacts with BNIP1. Post-translationally, polyubiquitinated. 'Lys-29' autoubiquitination leads to proteasomal degradation.

The protein resides in the endoplasmic reticulum membrane. It carries out the reaction S-ubiquitinyl-[E2 ubiquitin-conjugating enzyme]-L-cysteine + [acceptor protein]-L-lysine = [E2 ubiquitin-conjugating enzyme]-L-cysteine + N(6)-ubiquitinyl-[acceptor protein]-L-lysine.. It functions in the pathway protein modification; protein ubiquitination. E3 ubiquitin protein ligase that is part of an apoptotic signaling pathway activated by endoplasmic reticulum stress. Stimulates the expression of proteins specific of the unfolded protein response (UPR), ubiquitinates BNIP1 and regulates its localization to the mitochondrion and induces calcium release from the endoplasmic reticulum that ultimately leads to cell apoptosis. Plays a role in the maintenance of intestinal homeostasis and clearance of enteric pathogens. Upon NOD2 stimulation, ubiquitinates the ER stress sensor activating transcription factor 6/ATF6 and promotes the unfolded protein response UPR. Participates in basal level of autophagy maintenance by regulating the ubiquitination of EPHB2. Upon stimulation by ligand EFNB1, ubiquitinates EPHB2 and further recruits MAP1LC3B for autophagy induction. Controls nutrient sensing by ubiquitinating Sestrin-2/SESN2, which is an intracellular sensor of cytosolic leucine and inhibitor of mTORC1 activity. The protein is E3 ubiquitin-protein ligase RNF186 of Bos taurus (Bovine).